A 435-amino-acid polypeptide reads, in one-letter code: Ribosomal protein uS12 methylthiotransferase RimO (435 aa).

Residues 3–115 (KKLHVVSLGC…IDELISQKKS (113 aa)) form the MTTase N-terminal domain. The [4Fe-4S] cluster site is built by C12, C46, C78, C146, C150, and C153. Residues 132-361 (TGSNYHAYIK…DAIVKKQQMK (230 aa)) enclose the Radical SAM core domain.

Belongs to the methylthiotransferase family. RimO subfamily. It depends on [4Fe-4S] cluster as a cofactor.

The protein resides in the cytoplasm. The enzyme catalyses L-aspartate(89)-[ribosomal protein uS12]-hydrogen + (sulfur carrier)-SH + AH2 + 2 S-adenosyl-L-methionine = 3-methylsulfanyl-L-aspartate(89)-[ribosomal protein uS12]-hydrogen + (sulfur carrier)-H + 5'-deoxyadenosine + L-methionine + A + S-adenosyl-L-homocysteine + 2 H(+). Functionally, catalyzes the methylthiolation of an aspartic acid residue of ribosomal protein uS12. The protein is Ribosomal protein uS12 methylthiotransferase RimO of Nitratiruptor sp. (strain SB155-2).